A 498-amino-acid polypeptide reads, in one-letter code: ATP synthase subunit beta, chloroplastic (498 aa).

172-179 contacts ATP; sequence GGAGVGKT.

The protein belongs to the ATPase alpha/beta chains family. F-type ATPases have 2 components, CF(1) - the catalytic core - and CF(0) - the membrane proton channel. CF(1) has five subunits: alpha(3), beta(3), gamma(1), delta(1), epsilon(1). CF(0) has four main subunits: a(1), b(1), b'(1) and c(9-12).

The protein localises to the plastid. Its subcellular location is the chloroplast thylakoid membrane. The catalysed reaction is ATP + H2O + 4 H(+)(in) = ADP + phosphate + 5 H(+)(out). Functionally, produces ATP from ADP in the presence of a proton gradient across the membrane. The catalytic sites are hosted primarily by the beta subunits. The polypeptide is ATP synthase subunit beta, chloroplastic (Zea mays (Maize)).